The primary structure comprises 143 residues: Nucleoside diphosphate kinase (143 aa).

Positions 11, 59, 87, 93, 104, and 114 each coordinate ATP. His-117 functions as the Pros-phosphohistidine intermediate in the catalytic mechanism.

This sequence belongs to the NDK family. Homotetramer. Mg(2+) serves as cofactor.

Its subcellular location is the cytoplasm. It catalyses the reaction a 2'-deoxyribonucleoside 5'-diphosphate + ATP = a 2'-deoxyribonucleoside 5'-triphosphate + ADP. It carries out the reaction a ribonucleoside 5'-diphosphate + ATP = a ribonucleoside 5'-triphosphate + ADP. Major role in the synthesis of nucleoside triphosphates other than ATP. The ATP gamma phosphate is transferred to the NDP beta phosphate via a ping-pong mechanism, using a phosphorylated active-site intermediate. This is Nucleoside diphosphate kinase from Ectopseudomonas mendocina (strain ymp) (Pseudomonas mendocina).